We begin with the raw amino-acid sequence, 360 residues long: Peptide chain release factor 1 (360 aa).

Q237 is modified (N5-methylglutamine).

This sequence belongs to the prokaryotic/mitochondrial release factor family. Post-translationally, methylated by PrmC. Methylation increases the termination efficiency of RF1.

It is found in the cytoplasm. Functionally, peptide chain release factor 1 directs the termination of translation in response to the peptide chain termination codons UAG and UAA. This Ectopseudomonas mendocina (strain ymp) (Pseudomonas mendocina) protein is Peptide chain release factor 1.